The chain runs to 66 residues: VRDAYIAQNYNCVYACARDAYCNDLCTKNGARSGLFATFGPHGDACWCIALPNNVPLKVQGKCHRK.

Positions 2–64 constitute an LCN-type CS-alpha/beta domain; sequence RDAYIAQNYN…VPLKVQGKCH (63 aa). 3 cysteine pairs are disulfide-bonded: C12/C63, C22/C46, and C26/C48.

This sequence belongs to the long (3 C-C) scorpion toxin superfamily. Post-translationally, only three disulfide bridges can be formed, because only seven cysteines are present. As to expression, expressed by the venom gland.

Its subcellular location is the secreted. Its function is as follows. Binds voltage-independently at site-3 of sodium channels (Nav) and inhibits the inactivation of the activated channels, thereby blocking neuronal transmission. In Buthus occitanus mardochei (Moroccan scorpion), this protein is Toxin Boma6e.